The following is an 84-amino-acid chain: Beta-defensin 119 (84 aa).

Residues 1-21 (MKLLYLFLAILLAIEEPVISG) form the signal peptide. 2 disulfides stabilise this stretch: Cys-35–Cys-49 and Cys-39–Cys-56.

Belongs to the beta-defensin family.

Its subcellular location is the secreted. Has antibacterial activity. The polypeptide is Beta-defensin 119 (DEFB119) (Pan troglodytes (Chimpanzee)).